The chain runs to 316 residues: Pantothenate kinase (316 aa).

ATP is bound at residue 95–102 (GSVAVGKS).

The protein belongs to the prokaryotic pantothenate kinase family.

Its subcellular location is the cytoplasm. It carries out the reaction (R)-pantothenate + ATP = (R)-4'-phosphopantothenate + ADP + H(+). Its pathway is cofactor biosynthesis; coenzyme A biosynthesis; CoA from (R)-pantothenate: step 1/5. In Enterobacter sp. (strain 638), this protein is Pantothenate kinase.